Reading from the N-terminus, the 282-residue chain is HTH-type transcriptional activator RhaR (282 aa).

One can recognise an HTH araC/xylS-type domain in the interval 179–277; it reads DKLITRLAAS…GMTPSQWRHL (99 aa). DNA-binding regions (H-T-H motif) lie at residues 196-217 and 244-267; these read DKFC…RQQT and ISDI…TRET.

Binds DNA as a dimer.

It is found in the cytoplasm. Its function is as follows. Activates expression of the rhaSR operon in response to L-rhamnose. This chain is HTH-type transcriptional activator RhaR, found in Escherichia coli O1:K1 / APEC.